A 545-amino-acid chain; its full sequence is Glutamine-dependent NAD(+) synthetase (545 aa).

The region spanning 5–247 (LRIAMAQFDF…DQWLVVDYMR (243 aa)) is the CN hydrolase domain. Glutamate 46 acts as the Proton acceptor; for glutaminase activity in catalysis. Lysine 113 acts as the For glutaminase activity in catalysis. Tyrosine 119 is an L-glutamine binding site. Catalysis depends on cysteine 151, which acts as the Nucleophile; for glutaminase activity. L-glutamine-binding residues include serine 177 and lysine 183. A ligase region spans residues 269–545 (VWRAVVRGVQ…RYPISNAYRG (277 aa)). 292 to 299 (GLSGGIDS) lines the ATP pocket. Asparagine 375 serves as a coordination point for deamido-NAD(+). An ATP-binding site is contributed by threonine 399. Residues glutamate 404 and lysine 516 each contribute to the deamido-NAD(+) site.

It in the C-terminal section; belongs to the NAD synthetase family.

It catalyses the reaction deamido-NAD(+) + L-glutamine + ATP + H2O = L-glutamate + AMP + diphosphate + NAD(+) + H(+). It participates in cofactor biosynthesis; NAD(+) biosynthesis; NAD(+) from deamido-NAD(+) (L-Gln route): step 1/1. Its function is as follows. Catalyzes the ATP-dependent amidation of deamido-NAD to form NAD. Uses L-glutamine as a nitrogen source. This is Glutamine-dependent NAD(+) synthetase from Xylella fastidiosa (strain Temecula1 / ATCC 700964).